Reading from the N-terminus, the 334-residue chain is Cathepsin L2 (334 aa).

The N-terminal stretch at 1–17 is a signal peptide; that stretch reads MNLSLVLAAFCLGIASA. Residues 18–113 constitute a propeptide, activation peptide; it reads VPKFDQNLDT…KVFREPLFLD (96 aa). 2 disulfides stabilise this stretch: Cys135–Cys178 and Cys169–Cys211. Residue Cys138 is part of the active site. N-linked (GlcNAc...) asparagine glycosylation occurs at Asn221. Cysteines 270 and 323 form a disulfide. Residue His277 is part of the active site. Asn292 is a glycosylation site (N-linked (GlcNAc...) asparagine). Asn301 is a catalytic residue.

It belongs to the peptidase C1 family. In terms of tissue distribution, predominantly expressed in the thymus and testis. Also expressed in corneal epithelium, and to a lesser extent in conjunctival epithelium and skin.

Its subcellular location is the lysosome. It catalyses the reaction The recombinant enzyme hydrolyzes proteins (serum albumin, collagen) and synthetic substrates (Z-Phe-Arg-NHMec &gt; Z-Leu-Arg-NHMec &gt; Z-Val-Arg-NHMec).. With respect to regulation, inhibited by CST6. Cysteine protease. May have an important role in corneal physiology. The protein is Cathepsin L2 (CTSV) of Homo sapiens (Human).